Consider the following 33-residue polypeptide: Protamine-2C (33 aa).

A disordered region spans residues 1-33 (MPRRRRSSRRPVRRRRRPRVSRRRRRRGGRRRR).

As to expression, testis.

It is found in the nucleus. The protein localises to the chromosome. Protamines substitute for histones in the chromatin of sperm during the haploid phase of spermatogenesis. They compact sperm DNA into a highly condensed, stable and inactive complex. In Oncorhynchus mykiss (Rainbow trout), this protein is Protamine-2C.